The sequence spans 234 residues: MKVGIIAAMEEELTLLVDRLDNCEEVQLGHCKYYTGQINGVEVGLMRCGIGKVNAAIGTTLMIDKLKPKCLINTGVAGGFINEMNVGDIVISSSVRHHDADATAFGYELGQIPDMPSEFQADRRLVEMATKVNLKSKARIFEGPVFSGDSFIHTTEQVENILKNFPQIMAVEMEGASIAQTSHLFNIPFVLIRSISDKVRETKSADTYTQSMEESAKNSVQVVFEMVEQLKEGM.

Catalysis depends on Glu-12, which acts as the Proton acceptor. Residues Gly-78, Ile-152, and 173-174 (ME) each bind substrate. The Proton donor role is filled by Asp-197.

The protein belongs to the PNP/UDP phosphorylase family. MtnN subfamily.

It carries out the reaction S-adenosyl-L-homocysteine + H2O = S-(5-deoxy-D-ribos-5-yl)-L-homocysteine + adenine. The enzyme catalyses S-methyl-5'-thioadenosine + H2O = 5-(methylsulfanyl)-D-ribose + adenine. It catalyses the reaction 5'-deoxyadenosine + H2O = 5-deoxy-D-ribose + adenine. Its pathway is amino-acid biosynthesis; L-methionine biosynthesis via salvage pathway; S-methyl-5-thio-alpha-D-ribose 1-phosphate from S-methyl-5'-thioadenosine (hydrolase route): step 1/2. Catalyzes the irreversible cleavage of the glycosidic bond in both 5'-methylthioadenosine (MTA) and S-adenosylhomocysteine (SAH/AdoHcy) to adenine and the corresponding thioribose, 5'-methylthioribose and S-ribosylhomocysteine, respectively. Also cleaves 5'-deoxyadenosine, a toxic by-product of radical S-adenosylmethionine (SAM) enzymes, into 5-deoxyribose and adenine. In Desulfotalea psychrophila (strain LSv54 / DSM 12343), this protein is 5'-methylthioadenosine/S-adenosylhomocysteine nucleosidase.